The chain runs to 31 residues: Cyclotide psybry B (31 aa).

Positions 1–31 form a cross-link, cyclopeptide (Gly-Asn); it reads GFNPCGETCWNKPTCHAPGCTCSIANICVRN. 3 cysteine pairs are disulfide-bonded: Cys5–Cys20, Cys9–Cys22, and Cys15–Cys28.

In terms of processing, this is a cyclic peptide.

In terms of biological role, probably participates in a plant defense mechanism. In Psychotria brachyceras, this protein is Cyclotide psybry B.